A 1276-amino-acid chain; its full sequence is Histone-lysine N-methyltransferase PRDM16 (1276 aa).

Basic residues predominate over residues 1–10 (MRSKARARKL). The disordered stretch occupies residues 1–68 (MRSKARARKL…DFTPKEGSPY (68 aa)). The SET domain occupies 82–211 (ADFELRESSI…PGEELLVHVK (130 aa)). The segment at 230-253 (FRCDECDELFQSKLDLRRHKKYTC) adopts a C2H2-type 1; atypical zinc-finger fold. 5 consecutive C2H2-type zinc fingers follow at residues 281-303 (HECKDCERMFPNKYSLEQHMVIH), 309-331 (YKCDQCPKAFNWKSNLIRHQMSH), 337-360 (FECENCVKVFTDPSNLQRHIRSQH), 366-388 (HACPDCGKTFATSSGLKQHKHIH), and 394-416 (FICEVCHKSYTQFSNLCRHKRMH). The C2H2-type 7; atypical zinc finger occupies 423 to 445 (IKCKDCGQMFSTTSSLNKHRRFC). Disordered regions lie at residues 533–657 (SLLK…APPG) and 772–804 (PFDLTTKPKDVKPILPMPKGPSAPASGEEQPLD). Residues 561–570 (AVSNSSQGTT) are compositionally biased toward polar residues. The span at 575–597 (PEEKFESRLEDSCVEKLKTRSSD) shows a compositional bias: basic and acidic residues. The segment covering 609-624 (TTTGTDLDTTTGTGSD) has biased composition (low complexity). Basic and acidic residues predominate over residues 632–642 (DPDKDKGKGKS). The segment at 679-1038 (DEQLLTATGA…KHEHENAPVS (360 aa)) is interaction with CTBP1, CTBP2 and ZNF516. The tract at residues 739–1276 (PFTDRALAHN…SGAFHPINHL (538 aa)) is mediates interaction with SKI and regulation of TGF-beta signaling. 3 consecutive C2H2-type zinc fingers follow at residues 951–973 (YTCRYCGKIFPRSANLTRHLRTH), 979–1002 (YRCKYCDRSFSISSNLQRHVRNIH), and 1008–1032 (FKCHLCNRCFGQQTNLDRHLKKHEH). 2 disordered regions span residues 1033-1065 (ENAPVSQHPGVLTNHLGTSASSPTSESDNHALL) and 1105-1163 (AQCP…EPAA). The segment covering 1047 to 1058 (HLGTSASSPTSE) has biased composition (polar residues). Over residues 1116-1133 (EDVEEEDDDDLEEDDEDS) the composition is skewed to acidic residues.

It belongs to the PRDM16 family. Interacts with CEBPA, CEBPB and CEBPD; the interaction is direct. Interacts with PPARG and PPARA; controls brown adipocytes differentiation. Interacts with CTBP1 and CTBP2; represses the expression of WAT-specific genes. Interacts with PPARGC1A and PPARGC1B; interaction with PPARGC1A or PPARGC1B activates the transcription of BAT-specific gene. Interacts with HDAC1, SKI, SMAD2 and SMAD3; the interaction with SKI promotes the recruitment of SMAD3-HDAC1 complex on the promoter of TGF-beta target genes. Interacts with ZNF516; the interaction is direct and may play a role in the transcription of brown adipose tissue-specific gene. In terms of tissue distribution, expressed in uterus and kidney. Expressed in both cardiomyocytes and interstitial cells.

It localises to the nucleus. The protein localises to the cytoplasm. It carries out the reaction L-lysyl(9)-[histone H3] + S-adenosyl-L-methionine = N(6)-methyl-L-lysyl(9)-[histone H3] + S-adenosyl-L-homocysteine + H(+). Binds DNA and functions as a transcriptional regulator. Displays histone methyltransferase activity and monomethylates 'Lys-9' of histone H3 (H3K9me1) in vitro. Probably catalyzes the monomethylation of free histone H3 in the cytoplasm which is then transported to the nucleus and incorporated into nucleosomes where SUV39H methyltransferases use it as a substrate to catalyze histone H3 'Lys-9' trimethylation. Likely to be one of the primary histone methyltransferases along with MECOM/PRDM3 that direct cytoplasmic H3K9me1 methylation. Functions in the differentiation of brown adipose tissue (BAT) which is specialized in dissipating chemical energy in the form of heat in response to cold or excess feeding while white adipose tissue (WAT) is specialized in the storage of excess energy and the control of systemic metabolism. Together with CEBPB, regulates the differentiation of myoblastic precursors into brown adipose cells. Functions as a repressor of TGF-beta signaling. In terms of biological role, binds DNA and functions as a transcriptional regulator. Functions as a repressor of TGF-beta signaling. May regulate granulocyte differentiation. The polypeptide is Histone-lysine N-methyltransferase PRDM16 (Homo sapiens (Human)).